Here is a 125-residue protein sequence, read N- to C-terminus: Neuraminyllactose-binding hemagglutinin (125 aa).

The segment at 92–97 (KRTIQK) is N-acetyl-neuraminyl-alpha(2,3)-lactose binding motif.

It is found in the cell outer membrane. The chain is Neuraminyllactose-binding hemagglutinin (hpaA) from Helicobacter pylori (Campylobacter pylori).